We begin with the raw amino-acid sequence, 504 residues long: Maturase K (504 aa).

Belongs to the intron maturase 2 family. MatK subfamily.

It is found in the plastid. Its subcellular location is the chloroplast. Functionally, usually encoded in the trnK tRNA gene intron. Probably assists in splicing its own and other chloroplast group II introns. The chain is Maturase K from Quercus suber (Cork oak).